Here is a 243-residue protein sequence, read N- to C-terminus: Terpene cyclase penB (243 aa).

3 helical membrane-spanning segments follow: residues 19–39 (IANI…VGMI), 48–68 (YGMA…YSLI), and 78–98 (GVFI…IKFA). Residue N111 is glycosylated (N-linked (GlcNAc...) asparagine). The next 4 helical transmembrane spans lie at 112–132 (LSLI…ALAA), 137–157 (SLAY…GGLC), 172–194 (LWLS…WMYW), and 205–225 (LVLW…LCYW).

This sequence belongs to the paxB family.

It is found in the membrane. It functions in the pathway secondary metabolite biosynthesis. Functionally, terpene cyclase; part of the gene cluster that mediates the biosynthesis of the indole diterpenes penitrems. The geranylgeranyl diphosphate (GGPP) synthase penG catalyzes the first step in penitrem biosynthesis via conversion of farnesyl pyrophosphate and isopentyl pyrophosphate into geranylgeranyl pyrophosphate (GGPP). Condensation of indole-3-glycerol phosphate with GGPP by the prenyl transferase penC then forms 3-geranylgeranylindole (3-GGI). Epoxidation by the FAD-dependent monooxygenase penM leads to a epoxidized-GGI that is substrate of the terpene cyclase penB for cyclization to yield paspaline. Paspaline is subsequently converted to 13-desoxypaxilline by the cytochrome P450 monooxygenase penP, the latter being then converted to paxilline by the cytochrome P450 monooxygenase penQ. Paxilline is converted to beta-paxitriol via C-10 ketoreduction by the short-chain dehydrogenase PC-15 which can be monoprenylated at the C-20 by the indole diterpene prenyltransferase penD. A two-step elimination (acetylation and elimination) process performed by the O-acetyltransferase PC-16 and the P.simplicissimum ptmI-ortholog not yet identified in P.crustosum, leads to the production of the prenylated form of penijanthine. The FAD-linked oxidoreductase ptmO then converts the prenylated form of penijanthine into PC-M5 which is in turn transformed into PC-M4 by the aromatic dimethylallyltransferase PC-22. A series of oxidation steps involving 4 cytochrome P450 monooxygenases (PC-21, PC-05, PC-23, PC-20) and a FAD-dependent monooxygenase (PC-14) are required for the transformation of PC-M4 to penitrems A and E. Synthesis of these final products is proposed to proceed via penitrems D and C (PC-21, PC-05, PC-14) and penitrems B and F (PC-21, PC-05, PC-14, PC-23). The polypeptide is Terpene cyclase penB (penB) (Penicillium crustosum (Blue mold fungus)).